The primary structure comprises 304 residues: 6-dehydroglucose reductase (304 aa).

NADP(+) is bound by residues Trp28, Arg29, and Asp56. The active-site Proton donor is the Tyr61. Residues Tyr61, His133, and Arg134 each contribute to the D-glucose site. Residues Ser163, Asn164, Gln185, Ser215, Leu217, Gly219, Gly268, Ser269, Gln270, and Arg274 each contribute to the NADP(+) site.

Belongs to the aldo/keto reductase family.

It catalyses the reaction D-glucose + NADP(+) = 6-dehydro-D-glucose + NADPH + H(+). Its function is as follows. Part of the alkanesulfonate monooxygenase (sulfo-ASMO) pathway, a D-sulfoquinovose degradation pathway that enables the complete utilization of all carbons within sulfoquinovose (SQ) with concomitant production of inorganic sulfite. Catalyzes the NADP-dependent reduction of 6-dehydro-D-glucose to D-glucose. Can also catalyze the reversible reaction, the formation of 6-dehydro-D-glucose from D-glucose in the presence of NADP(+). The protein is 6-dehydroglucose reductase of Novosphingobium aromaticivorans (strain ATCC 700278 / DSM 12444 / CCUG 56034 / CIP 105152 / NBRC 16084 / F199).